Here is a 610-residue protein sequence, read N- to C-terminus: Solute carrier family 2, facilitated glucose transporter member 12 (610 aa).

Residues 1–49 (MDAPEESIRMTSDPQSKIYVQNPDTHIHLEQGPSAKSGNGRALVLCSVS) are Cytoplasmic-facing. A helical membrane pass occupies residues 50-70 (VACLSGLLMGYEMSLISGALL). Residues 71-84 (QLRDVLTLSCPEQE) lie on the Extracellular side of the membrane. The helical transmembrane segment at 85-105 (QVVGSLLLGAFLLSLGGGTIL) threads the bilayer. Topologically, residues 106-118 (DHYGRRFTIILTA) are cytoplasmic. Residues 119–139 (LLCVLGTLLSVCVVSFWALVV) traverse the membrane as a helical segment. Residues 140–141 (GR) lie on the Extracellular side of the membrane. Residues 142–162 (MLVGMSVALSGTASCLYAAEV) traverse the membrane as a helical segment. Over 163–176 (APAAWRGRCVCVYE) the chain is Cytoplasmic. A helical membrane pass occupies residues 177 to 197 (LMVVLGMLLGFGLSWAFAGVP). Residues 198-201 (DGWR) lie on the Extracellular side of the membrane. Residues 202–222 (FTFGGALLPALLQAGVMPLLP) traverse the membrane as a helical segment. Over 223–286 (DSPRFLLAQQ…FQSRDNMLQR (64 aa)) the chain is Cytoplasmic. Residues 287–307 (LLVGAALVFLQQATGQPNILA) traverse the membrane as a helical segment. Over 308 to 325 (YASTVLSSVGFHGNEAAT) the chain is Extracellular. A helical membrane pass occupies residues 326–346 (LASTGFGVVKVGGTIPAIFLV). The Cytoplasmic segment spans residues 347–353 (DKVGPKA). Residues 354–374 (LLCVGVVVMMLSTATLGAITM) traverse the membrane as a helical segment. Over 375–475 (QSRTHVSSLC…LHEVSPSLKW (101 aa)) the chain is Extracellular. 3 N-linked (GlcNAc...) asparagine glycosylation sites follow: Asn-392, Asn-429, and Asn-438. Residues 476-496 (ISLVSLLVYVAGFSISLGPMV) traverse the membrane as a helical segment. The Cytoplasmic portion of the chain corresponds to 497–511 (HVVLSAIFPTGIRGK). A helical transmembrane segment spans residues 512 to 532 (AVSVISAFNWATNLLISMTFL). Residues 533 to 542 (TLTERIGLPT) lie on the Extracellular side of the membrane. The helical transmembrane segment at 543 to 563 (VIFSYSAMSFLLVVFVIVFVP) threads the bilayer. The Cytoplasmic portion of the chain corresponds to 564–610 (ETKGRSLEQISKELAMKNHLRGTLLCHRRKHKATAQPSQEEKALATV).

It belongs to the major facilitator superfamily. Sugar transporter (TC 2.A.1.1) family. Glucose transporter subfamily. Expressed in the main insulin-sensitive tissues, such as cardiac muscle, skeletal muscle and adipose tissue.

It localises to the cell membrane. Its subcellular location is the endomembrane system. It is found in the cytoplasm. The protein localises to the perinuclear region. The catalysed reaction is D-glucose(out) = D-glucose(in). Its function is as follows. Insulin-regulated facilitative glucose transporter. The sequence is that of Solute carrier family 2, facilitated glucose transporter member 12 from Danio rerio (Zebrafish).